The sequence spans 771 residues: Heat shock transcription factor (771 aa).

Residues 1–70 (MTTNLYAIAG…GIGISKPGLS (70 aa)) are disordered. Low complexity-rich tracts occupy residues 11 to 23 (PSKP…TPSP) and 31 to 42 (LKSLTSLPTNPL). Residues 43–62 (NPQGTSTSNALTNQSSSTGI) show a composition bias toward polar residues. Residues 78-168 (MKVPAFLNKL…PIELWEFANP (91 aa)) mediate DNA binding. The disordered stretch occupies residues 183–266 (RKNNRLSNSG…PPSHTSAGPL (84 aa)). Low complexity-rich tracts occupy residues 189–199 (SNSGVGSSSSL) and 212–233 (SASA…ISQG). Residues 238–262 (NHSTSGKYLITDGTTPGSAPPSHTS) are compositionally biased toward polar residues. The segment at 280–333 (GIAAIRQTQASIATDLRKLQASNEALWRQAYETQEKQRKHEETIDLIVSFLERL) is involved in trimerization. 2 stretches are compositionally biased toward basic and acidic residues: residues 350-372 (RGVG…ARFA) and 399-415 (TGEH…DRLV). Disordered stretches follow at residues 350–513 (RGVG…SSNA), 590–634 (QALT…GSGT), and 708–771 (SGVG…SGLK). A compositionally biased stretch (polar residues) spans 418–448 (GSNSEYSIPSVKRTSSSSHPLSLGQLGSSRF). 2 stretches are compositionally biased toward low complexity: residues 497-511 (LSPL…PSSS) and 599-620 (HNPS…SASA).

This sequence belongs to the HSF family. As to quaternary structure, homotrimer. Homotrimerization increases the affinity of HSF1 to DNA. Interacts with transcriptional coregulator SSA1 on chromatin. Phosphorylated at high temperature.

It localises to the nucleus. Its function is as follows. DNA-binding transcription factor that specifically binds heat shock promoter elements (HSE) and activates transcription. Promotes thermotolerance by transiently regulating a subset of genes. Induces expression of STI, SSA1, SSA2, HSP78 and KAR2 during the heat response. The polypeptide is Heat shock transcription factor (Cryptococcus neoformans var. grubii serotype A (strain H99 / ATCC 208821 / CBS 10515 / FGSC 9487) (Filobasidiella neoformans var. grubii)).